A 546-amino-acid chain; its full sequence is MLPRLYRSVAVGLPRAIRAKSTPLRLCIQACSSSDSLKPQHPSLTFSDDNSRTRGWKVMGTLIGLGAVLAYHDHRCRASQESPRIYSKEDVRSHNNLKTGVWVTLGSEVFDVTKFVDLHPGGQSKLMLAAGGPLEPFWALYAVHNQPHVRELLAEYKIGELNPEDRMSPPLEASDPYSNDPMRHPALRINSQRPFNAEPPPELLTESYITPNPIFFTRNHLPVPNLDPDTYRLHVVGAPGGQSLSLSLDDLHKFPKHEVTVTLQCAGNRRSEMNKVKEVKGLEWRTGAISTARWAGARLCDVLAQAGHRLRETEAHVCFEGLDSDPTGTAYGASIPLARAMDPQAEVLLAYEMNGQPLPRDHGFPVRVVVPGVVGARHVKWLGRVSVESEESYSHWQRRDYKGFSPSVDWDTVDFDLAPSIQELPIQSAITQPQDGTTVESGEVIIKGYAWSGGGRAVIRVDVSMDGGLTWQEAELEGEEQHPRKAWAWRIWQLKAHVPAEQKELNIICKAVDDSYNVQPDTVAPIWNLRGVLSNAWHRVHVQVVP.

The transit peptide at 1 to 80 (MLPRLYRSVA…YHDHRCRASQ (80 aa)) directs the protein to the mitochondrion. The region spanning 83–162 (PRIYSKEDVR…LAEYKIGELN (80 aa)) is the Cytochrome b5 heme-binding domain. His-119 contacts heme b. Phosphoserine is present on Ser-124. The heme b site is built by His-144, Gln-146, and His-148. A hinge region spans residues 166–175 (RMSPPLEASD). Positions 176-402 (PYSNDPMRHP…YSHWQRRDYK (227 aa)) are moco domain. Mo-molybdopterin is bound by residues 216 to 220 (FTRNH), Cys-265, Asp-323, His-362, Arg-367, and 378 to 380 (HVK). The homodimerization stretch occupies residues 403-539 (GFSPSVDWDT…RGVLSNAWHR (137 aa)).

As to quaternary structure, homodimer. The cofactor is heme b. It depends on Mo-molybdopterin as a cofactor.

The protein resides in the mitochondrion intermembrane space. The enzyme catalyses sulfite + O2 + H2O = sulfate + H2O2. It participates in energy metabolism; sulfur metabolism. In terms of biological role, catalyzes the oxidation of sulfite to sulfate, the terminal reaction in the oxidative degradation of sulfur-containing amino acids. This Rattus norvegicus (Rat) protein is Sulfite oxidase, mitochondrial.